Consider the following 707-residue polypeptide: uncharacterized protein (707 aa).

Disordered regions lie at residues 15-122 and 667-707; these read ALAK…LESY and ESVQ…DIDE. Basic and acidic residues-rich tracts occupy residues 18–32 and 40–52; these read KKND…DKGI and EGKD…DVEK. Residue S112 is modified to Phosphoserine. Positions 659–700 form a coiled coil; the sequence is EEQRKLIRESVQQDQEHKEQMRQKKKQALKSDDIELDDLSEE. Over residues 692-707 the composition is skewed to acidic residues; it reads IELDDLSEEEAEDIDE.

This sequence belongs to the NOC2 family.

Its subcellular location is the nucleus. It is found in the nucleolus. This is an uncharacterized protein from Schizosaccharomyces pombe (strain 972 / ATCC 24843) (Fission yeast).